Consider the following 20-residue polypeptide: Cathepsin L1 (20 aa).

Over residues 1–10 the composition is skewed to basic and acidic residues; that stretch reads AVPDKIDPRE. The interval 1–20 is disordered; that stretch reads AVPDKIDPRESGYVTGVKDQ.

Belongs to the peptidase C1 family. Dimer of a heavy and a light chain linked by disulfide bonds.

The protein resides in the lysosome. The catalysed reaction is Specificity close to that of papain. As compared to cathepsin B, cathepsin L exhibits higher activity toward protein substrates, but has little activity on Z-Arg-Arg-NHMec, and no peptidyl-dipeptidase activity.. Thiol protease that assists the parasite in burrowing through the gut wall and liver of its mammalian host. In Fasciola hepatica (Liver fluke), this protein is Cathepsin L1.